A 162-amino-acid polypeptide reads, in one-letter code: Ribonuclease P protein component (162 aa).

The disordered stretch occupies residues 1–63; it reads MDEKDLATQP…PPAAGGKLLS (63 aa). Residues 21–38 show a composition bias toward basic and acidic residues; it reads GPHEDPRRQEGVEAEKAE.

The protein belongs to the RnpA family. Consists of a catalytic RNA component (M1 or rnpB) and a protein subunit.

It catalyses the reaction Endonucleolytic cleavage of RNA, removing 5'-extranucleotides from tRNA precursor.. Functionally, RNaseP catalyzes the removal of the 5'-leader sequence from pre-tRNA to produce the mature 5'-terminus. It can also cleave other RNA substrates such as 4.5S RNA. The protein component plays an auxiliary but essential role in vivo by binding to the 5'-leader sequence and broadening the substrate specificity of the ribozyme. The chain is Ribonuclease P protein component from Thermus scotoductus.